Consider the following 83-residue polypeptide: Cytochrome b559 subunit alpha (83 aa).

The helical transmembrane segment at 22-36 threads the bilayer; it reads VIHSITIPALFIAGW. His-24 serves as a coordination point for heme.

Belongs to the PsbE/PsbF family. Heterodimer of an alpha subunit and a beta subunit. PSII is composed of 1 copy each of membrane proteins PsbA, PsbB, PsbC, PsbD, PsbE, PsbF, PsbH, PsbI, PsbJ, PsbK, PsbL, PsbM, PsbT, PsbX, PsbY, PsbZ, Psb30/Ycf12, peripheral proteins PsbO, CyanoQ (PsbQ), PsbU, PsbV and a large number of cofactors. It forms dimeric complexes. The cofactor is heme b.

The protein resides in the cellular thylakoid membrane. Its function is as follows. This b-type cytochrome is tightly associated with the reaction center of photosystem II (PSII). PSII is a light-driven water:plastoquinone oxidoreductase that uses light energy to abstract electrons from H(2)O, generating O(2) and a proton gradient subsequently used for ATP formation. It consists of a core antenna complex that captures photons, and an electron transfer chain that converts photonic excitation into a charge separation. In Synechococcus elongatus (strain ATCC 33912 / PCC 7942 / FACHB-805) (Anacystis nidulans R2), this protein is Cytochrome b559 subunit alpha.